The chain runs to 511 residues: Spermatogenesis-associated protein 2 (511 aa).

Positions 77-149 constitute a PUB domain; it reads ALHCAFSMLE…AYKLKELVES (73 aa). Residues 320–337 carry the PIM motif motif; the sequence is TYFPTQDDVDLYTDSEPR.

It belongs to the SPATA2 family. In terms of assembly, interacts (via the PIM motif) with RNF31/HOIP (via the PUB domain); the interaction is direct. Interacts (via the PUB domain) with CYLD; the interaction is direct. As to expression, expressed in the testis and to a lesser extent in the brain, while skeletal muscle and kidney show weak expression.

Its subcellular location is the cytoplasm. It localises to the nucleus. Bridging factor that mediates the recruitment of CYLD to the LUBAC complex, thereby regulating TNF-alpha-induced necroptosis. Acts as a direct binding intermediate that bridges RNF31/HOIP, the catalytic subunit of the LUBAC complex, and the deubiquitinase (CYLD), thereby recruiting CYLD to the TNF-R1 signaling complex (TNF-RSC). Required to activate the 'Met-1'- (linear) and 'Lys-63'-linked deubiquitinase activities of CYLD. Controls the kinase activity of RIPK1 and TNF-alpha-induced necroptosis by promoting 'Met-1'-linked deubiquitination of RIPK1 by CYLD. The sequence is that of Spermatogenesis-associated protein 2 from Rattus norvegicus (Rat).